The chain runs to 354 residues: MPLEERRSSGERNDAAPTNHRRPGEKRASTAKQVSSVPFLGAAGHQQSLPSSWKASCSGPLVMASDSDVKMLLNFVNLASSDIKAALDKSAPCRRSVDHRKYLQKQLKRFSQKYSRLPRGLPGRAAEPYLKRGSEDRPRRLLLDLGPDSSPGGGGGCKEKVLRNPYREECLAKEQLPQRQHPEAAQPGQVPMRKRQLPASFWEEPRPTHSYHVGLEGGLGPREGPPYEGKKNCKGLEPLGPETTLVSMSPRALAEKEPLKMPGVSLVGRVNAWSCCPFQYHGQPIYPGPLGALPQSPVPSLGLWRKSPAFPGELAHLCKDVDGLGQKVCRPVVLKPIPTKPAVPPPIFNVFGYL.

Basic and acidic residues-rich tracts occupy residues 1–14 (MPLE…ERND) and 129–142 (YLKR…RRLL). Disordered stretches follow at residues 1–35 (MPLE…KQVS), 117–160 (LPRG…CKEK), and 172–193 (AKEQ…VPMR).

Belongs to the FAM181 family.

The chain is Protein FAM181A (FAM181A) from Homo sapiens (Human).